Consider the following 505-residue polypeptide: Glutamate--tRNA ligase (505 aa).

Residues 12-22 (PSPTGALHIGG) carry the 'HIGH' region motif. A 'KMSKS' region motif is present at residues 260-264 (KLSKR). ATP is bound at residue K263.

It belongs to the class-I aminoacyl-tRNA synthetase family. Glutamate--tRNA ligase type 1 subfamily. In terms of assembly, monomer.

It is found in the cytoplasm. The catalysed reaction is tRNA(Glu) + L-glutamate + ATP = L-glutamyl-tRNA(Glu) + AMP + diphosphate. Catalyzes the attachment of glutamate to tRNA(Glu) in a two-step reaction: glutamate is first activated by ATP to form Glu-AMP and then transferred to the acceptor end of tRNA(Glu). This Parabacteroides distasonis (strain ATCC 8503 / DSM 20701 / CIP 104284 / JCM 5825 / NCTC 11152) protein is Glutamate--tRNA ligase.